The primary structure comprises 382 residues: MLKVLISAGEASGEMYGAALLDALRKLSPDPVEAFGLGGEKMRAAGCDIIVDSKDVAVVGIAEVVAHLPRIYGEFHKLLREADRRKPDVAVLIDFPDFHFRLAKALHARGIPVVYYVSPQLWAWRRGRIKLVQRYVKKMLVIFPFEEQFYREHNVEAEFTGHPLGELSVTVDPRTEFAVRYGLDPAKPWVGILPGSRRKEVQMILPTLIDAAKKLGPANEYLLPVASTLDAGWMQAQLLAIPQPPRVTLTSDARQTLVQSRAAMVASGTATVEASVLGTPFVMVYRVAPLSWRVGRRLVKLDRFAMPNLIAGREVVRELVQENFTADKVAAEVSALIEDGPRRAQVLKNLAEVREHLQSGRTNESAAERAARSVLSVAQRKD.

This sequence belongs to the LpxB family.

The catalysed reaction is a lipid X + a UDP-2-N,3-O-bis[(3R)-3-hydroxyacyl]-alpha-D-glucosamine = a lipid A disaccharide + UDP + H(+). The protein operates within bacterial outer membrane biogenesis; LPS lipid A biosynthesis. Its function is as follows. Condensation of UDP-2,3-diacylglucosamine and 2,3-diacylglucosamine-1-phosphate to form lipid A disaccharide, a precursor of lipid A, a phosphorylated glycolipid that anchors the lipopolysaccharide to the outer membrane of the cell. In Koribacter versatilis (strain Ellin345), this protein is Lipid-A-disaccharide synthase.